The chain runs to 262 residues: Expansin-A13 (262 aa).

The N-terminal stretch at 1–22 (MAGVARMLAAVVCAIMPAAAMA) is a signal peptide. The region spanning 52–167 (GGACGYGNLY…QRVPCMKKGG (116 aa)) is the Expansin-like EG45 domain. An Expansin-like CBD domain is found at 177 to 257 (YFQLVLLTNV…GWRFGQTFAS (81 aa)).

This sequence belongs to the expansin family. Expansin A subfamily. In terms of tissue distribution, expressed in roots and flowers.

It localises to the secreted. The protein resides in the cell wall. The protein localises to the membrane. May cause loosening and extension of plant cell walls by disrupting non-covalent bonding between cellulose microfibrils and matrix glucans. No enzymatic activity has been found. May be required for rapid internodal elongation in deepwater rice during submergence. The chain is Expansin-A13 (EXPA13) from Oryza sativa subsp. japonica (Rice).